The sequence spans 1050 residues: MAFKIKTFLSIKSHKIFYTDFYFFLKKKLIILIKNIFPEYFNFNNKYKNWNLICLPDFLYFKVNNTHFLDNVQYINSLIKIFLPLKFQNLKTNQIFFKNLLIFELPKYNSHNYCYLNGLKKIFISKYFTSNGIFFHKYLKRKYDIYYAKILLTNSNFFNIVLDLKLKQIYLSIKNLKFNFILFLYYLGINNKDILKYSRYKKSKILKLLIFTALQTNLINNKKFILKNLNYLKSIFKVTNLNKNYKHFIINKNKLNYNYGNFNKNNFLTIDFIFILDLLLDLQSKKLCFKNIDHLDNKHINTIGNYFQHNFKFYLKKFISIIPNLIKLKKFSLLKVYNFKELLILNPLIQYLEQINSFSELTHKYKLNNYNSSLKGILNLREICLNQIGKLCLIDTTEGINCGLIVNFAKHIRIYKKGIIQIYVSPVFKNKTKEFINFKTSLDQELYLIQFNNINLRKNKLFNENIKVVYNKNNFRIKFISNKKSFLLKFADLFSFTENLIPFIKYNDPARCLMGAKMQSQSVPLLNKKKSFVVTGYEKEIITKSDITIKALQEGIVLNASSLKIHIKDLFNREIVYYLSKYKKSNQNTLIHQKPLVWNGERVFTNQLLTQHQDIIDSEFAIGNNLLIYYGNFCGYDFEDAVIGSKRVLYQQLFSSLHMDIYEFNFGYNNENDIEFSTLEIPKQSYYIKKSLDSLGIVKEGEKILTGNILLTKIKVTKPNYTYKSIFKLIYSIFGKTIRNIKDNSLYIQTGKNGRVSKIELFLINTNSHYKTYNNSYLKCRIFICKQRFLTVGDKLCGRYGNKGILSYIAENADLPFLQNSFYPDIIVGALGIPSRMNLGQLFEALVGKIGFSYNIRILPSFTSSSNAYFNYLKILIYNFLMFNNLKKGFNWLYNFNLPGKFLIRDGRTGIKLKSSVLCGVSRYSKLIHMIKDKLHFRTTGPYTEILQQPLKGKKNLGGQRFGEMEIWALEAFGASYNLKEILNYKSDDCFARNNLKDYLLFRNSELQNSTITESFRVILKEFNGLILNLELFLITDDLEENYLNLTINY.

This sequence belongs to the RNA polymerase beta chain family. In terms of assembly, in plastids the minimal PEP RNA polymerase catalytic core is composed of four subunits: alpha, beta, beta', and beta''. When a (nuclear-encoded) sigma factor is associated with the core the holoenzyme is formed, which can initiate transcription (Potential).

It localises to the plastid. It is found in the apicoplast. The catalysed reaction is RNA(n) + a ribonucleoside 5'-triphosphate = RNA(n+1) + diphosphate. Functionally, DNA-dependent RNA polymerase catalyzes the transcription of DNA into RNA using the four ribonucleoside triphosphates as substrates. In Neospora caninum (Coccidian parasite), this protein is DNA-directed RNA polymerase subunit beta (rpoB).